Here is a 539-residue protein sequence, read N- to C-terminus: Polyol transporter 5 (539 aa).

The segment covering 1 to 11 (MTGATPENRTA) has biased composition (polar residues). Residues 1–24 (MTGATPENRTAPSPPPVKHVPESV) are disordered. 12 helical membrane-spanning segments follow: residues 37–57 (FACAILASMTSILLGYDIGVM), 73–93 (LQIGILAGSLNIYSLIGSCAA), 104–124 (YTIVLAGAIFFAGAILMGLSP), 127–147 (AFLMFGRFIAGIGVGYALMIA), 165–185 (SFPEVFINAGIMLGYVSNLAF), 196–216 (LMLGIGAVPSVILAIGVLAMP), 296–316 (IAAIGIHFFQQASGIDAVVLF), 333–353 (LLATVAVGVVKTSFILVATFL), 364–384 (LTSVGGMVLSLAALGTSLTII), 391–411 (VMWAVVVAIATVMTYVATFSI), 433–453 (GSSMGVVVNRVTSGVISISFL), and 463–483 (GAFYLFGGIATVAWVFFYTFL). 2 stretches are compositionally biased toward basic and acidic residues: residues 503–514 (WRDSKSKPKGNP) and 530–539 (QWKEGDTQSS). The segment at 503–539 (WRDSKSKPKGNPEKTVPNPEVEIGSNKQWKEGDTQSS) is disordered.

This sequence belongs to the major facilitator superfamily. Sugar transporter (TC 2.A.1.1) family. Highly expressed in roots. Expressed in vascular tissue of leaves, sepals and siliques.

Its subcellular location is the cell membrane. Functionally, plasma membrane broad-spectrum sugar-proton symporter. Mediates the uptake of linear polyols such as sorbitol, xylitol, erythritol or glycerol. Can transport the cyclic polyol myo-inositol and different hexoses, pentoses (including ribose), tetroses and sugar alcohols. In Arabidopsis thaliana (Mouse-ear cress), this protein is Polyol transporter 5 (PLT5).